The primary structure comprises 332 residues: Biotin synthase (332 aa).

The region spanning 53–282 (HFGKKVKLNM…TKEIRISGGR (230 aa)) is the Radical SAM core domain. Positions 71, 75, and 78 each coordinate [4Fe-4S] cluster. Positions 115, 147, 207, and 277 each coordinate [2Fe-2S] cluster.

Belongs to the radical SAM superfamily. Biotin synthase family. As to quaternary structure, homodimer. The cofactor is [4Fe-4S] cluster. [2Fe-2S] cluster is required as a cofactor.

The catalysed reaction is (4R,5S)-dethiobiotin + (sulfur carrier)-SH + 2 reduced [2Fe-2S]-[ferredoxin] + 2 S-adenosyl-L-methionine = (sulfur carrier)-H + biotin + 2 5'-deoxyadenosine + 2 L-methionine + 2 oxidized [2Fe-2S]-[ferredoxin]. It participates in cofactor biosynthesis; biotin biosynthesis; biotin from 7,8-diaminononanoate: step 2/2. In terms of biological role, catalyzes the conversion of dethiobiotin (DTB) to biotin by the insertion of a sulfur atom into dethiobiotin via a radical-based mechanism. This is Biotin synthase from Bacillus mycoides (strain KBAB4) (Bacillus weihenstephanensis).